Reading from the N-terminus, the 351-residue chain is Nicotinate-nucleotide--dimethylbenzimidazole phosphoribosyltransferase (351 aa).

The Proton acceptor role is filled by E315.

The protein belongs to the CobT family.

The catalysed reaction is 5,6-dimethylbenzimidazole + nicotinate beta-D-ribonucleotide = alpha-ribazole 5'-phosphate + nicotinate + H(+). It participates in nucleoside biosynthesis; alpha-ribazole biosynthesis; alpha-ribazole from 5,6-dimethylbenzimidazole: step 1/2. Catalyzes the synthesis of alpha-ribazole-5'-phosphate from nicotinate mononucleotide (NAMN) and 5,6-dimethylbenzimidazole (DMB). This is Nicotinate-nucleotide--dimethylbenzimidazole phosphoribosyltransferase from Acetivibrio thermocellus (strain ATCC 27405 / DSM 1237 / JCM 9322 / NBRC 103400 / NCIMB 10682 / NRRL B-4536 / VPI 7372) (Clostridium thermocellum).